We begin with the raw amino-acid sequence, 632 residues long: MAU2 chromatid cohesion factor homolog (632 aa).

2 TPR repeats span residues 453-486 and 493-526; these read GGFY…ANAE and SCSL…ASKI.

Belongs to the SCC4/mau-2 family. In terms of assembly, interacts with Nipped-B to form the cohesin loading complex.

It localises to the nucleus. Its subcellular location is the nucleoplasm. In terms of biological role, required for association of the cohesin complex with chromatin during interphase. Plays a role in sister chromatid cohesion and normal progression through prometaphase. In Drosophila sechellia (Fruit fly), this protein is MAU2 chromatid cohesion factor homolog.